A 707-amino-acid polypeptide reads, in one-letter code: D-(-)-3-hydroxybutyrate oligomer hydrolase (707 aa).

Residues 1 to 32 (MASVFKVRSASGHVPVVRTLAAMMAVTVVLTA) form the signal peptide. Serine 321 (charge relay system) is an active-site residue.

The protein belongs to the D-(-)-3-hydroxybutyrate oligomer hydrolase family.

The protein resides in the secreted. The catalysed reaction is (3R)-hydroxybutanoate dimer + H2O = 2 (R)-3-hydroxybutanoate + H(+). It participates in lipid metabolism; butanoate metabolism. Functionally, participates in the degradation of poly-3-hydroxybutyrate (PHB). It works downstream of poly(3-hydroxybutyrate) depolymerase, hydrolyzing D(-)-3-hydroxybutyrate oligomers of various length (3HB-oligomers) into 3HB-monomers. The sequence is that of D-(-)-3-hydroxybutyrate oligomer hydrolase from Paraburkholderia xenovorans (strain LB400).